The following is a 399-amino-acid chain: Glycosyltransferase BC10 (399 aa).

The Cytoplasmic portion of the chain corresponds to 1-17; sequence MKPPRRWMYGRGGGKGK. A helical; Signal-anchor for type II membrane protein transmembrane segment spans residues 18 to 38; sequence PAGLLLLGVFLCLSVVLLLLL. Topologically, residues 39 to 399 are lumenal; sequence HGSSPSLEGE…LIAANGASTM (361 aa). N-linked (GlcNAc...) asparagine glycosylation is found at Asn-142 and Asn-188.

The protein belongs to the glycosyltransferase 14 family. As to expression, expressed in roots, culms, leaves and panicles. Expressed in vascular bundles of leaf sheaths and stems where sclerenchyma cells are developing. Expressed in mechanical tissues of young organs, such as young leaf sheaths, stems and tiller buds.

It is found in the membrane. Its function is as follows. Glycosyltransferase required for the regulation of cellulose biosynthesis in the cell wall. Required for the biosynthesis of hexoses (glucose, mannose and galactose) in both cellulosic and non-cellulosic (pectins and hemicelluloses) components of cell walls. Required for the formation of arabinogalactan proteins which contribute to the strengthening of cell walls. Possesses low glycosyltransferase activity. This Oryza sativa subsp. japonica (Rice) protein is Glycosyltransferase BC10.